A 368-amino-acid chain; its full sequence is Glutamate 5-kinase (368 aa).

Lysine 12 serves as a coordination point for ATP. Positions 52, 139, and 151 each coordinate substrate. ATP is bound by residues 171–172 and 213–219; these read SD and TGGMKTK. Positions 277 to 354 constitute a PUA domain; it reads KGALIIDDGA…KEIEKLLGYI (78 aa).

The protein belongs to the glutamate 5-kinase family.

Its subcellular location is the cytoplasm. The catalysed reaction is L-glutamate + ATP = L-glutamyl 5-phosphate + ADP. Its pathway is amino-acid biosynthesis; L-proline biosynthesis; L-glutamate 5-semialdehyde from L-glutamate: step 1/2. Functionally, catalyzes the transfer of a phosphate group to glutamate to form L-glutamate 5-phosphate. The protein is Glutamate 5-kinase of Pelagibacter ubique (strain HTCC1062).